The chain runs to 177 residues: Large ribosomal subunit protein uL5 (177 aa).

The protein belongs to the universal ribosomal protein uL5 family. In terms of assembly, part of the 50S ribosomal subunit; part of the 5S rRNA/L5/L18/L25 subcomplex. Contacts the 5S rRNA and the P site tRNA. Forms a bridge to the 30S subunit in the 70S ribosome.

Functionally, this is one of the proteins that bind and probably mediate the attachment of the 5S RNA into the large ribosomal subunit, where it forms part of the central protuberance. In the 70S ribosome it contacts protein S13 of the 30S subunit (bridge B1b), connecting the 2 subunits; this bridge is implicated in subunit movement. Contacts the P site tRNA; the 5S rRNA and some of its associated proteins might help stabilize positioning of ribosome-bound tRNAs. In Ehrlichia ruminantium (strain Welgevonden), this protein is Large ribosomal subunit protein uL5.